Here is an 83-residue protein sequence, read N- to C-terminus: Phosphoribosylformylglycinamidine synthase subunit PurS (83 aa).

This sequence belongs to the PurS family. Homodimer. Part of the FGAM synthase complex composed of 1 PurL, 1 PurQ and 2 PurS subunits.

The protein resides in the cytoplasm. It carries out the reaction N(2)-formyl-N(1)-(5-phospho-beta-D-ribosyl)glycinamide + L-glutamine + ATP + H2O = 2-formamido-N(1)-(5-O-phospho-beta-D-ribosyl)acetamidine + L-glutamate + ADP + phosphate + H(+). It participates in purine metabolism; IMP biosynthesis via de novo pathway; 5-amino-1-(5-phospho-D-ribosyl)imidazole from N(2)-formyl-N(1)-(5-phospho-D-ribosyl)glycinamide: step 1/2. Part of the phosphoribosylformylglycinamidine synthase complex involved in the purines biosynthetic pathway. Catalyzes the ATP-dependent conversion of formylglycinamide ribonucleotide (FGAR) and glutamine to yield formylglycinamidine ribonucleotide (FGAM) and glutamate. The FGAM synthase complex is composed of three subunits. PurQ produces an ammonia molecule by converting glutamine to glutamate. PurL transfers the ammonia molecule to FGAR to form FGAM in an ATP-dependent manner. PurS interacts with PurQ and PurL and is thought to assist in the transfer of the ammonia molecule from PurQ to PurL. The sequence is that of Phosphoribosylformylglycinamidine synthase subunit PurS from Methanocaldococcus jannaschii (strain ATCC 43067 / DSM 2661 / JAL-1 / JCM 10045 / NBRC 100440) (Methanococcus jannaschii).